The sequence spans 338 residues: UbiA prenyltransferase domain-containing protein 1 (338 aa).

The tract at residues 1-39 is disordered; that stretch reads MAAVQAPGEKINIQAGETTQVGDTDQQRNDWPEEDRLPE. Ala2 bears the N-acetylalanine mark. Over residues 15–24 the composition is skewed to polar residues; that stretch reads AGETTQVGDT. Over residues 25 to 39 the composition is skewed to basic and acidic residues; the sequence is DQQRNDWPEEDRLPE. The next 8 membrane-spanning stretches (helical) occupy residues 83–103, 134–154, 160–180, 188–208, 209–229, 245–267, 277–297, and 315–335; these read LLLGCAVAVLAVHGAGNLVNT, FGVFLYTLGCVCAAYLYYLST, LALIYFGGLSGSFLYTGGIGF, LVILITFGPLAVMFAYAVQVG, SLAIFPLVYAIPLALSTEAIL, IVTLAILIGPTLSYILYNTLLFL, THCSISLALPLLTSPMAFSLE, and LNLLLGLFYVFGIILAPAGSL.

This sequence belongs to the UbiA prenyltransferase family. In terms of assembly, interacts with HMGCR and SOAT1.

It is found in the endoplasmic reticulum membrane. The protein resides in the golgi apparatus membrane. It localises to the mitochondrion membrane. It carries out the reaction menadiol + (2E,6E,10E)-geranylgeranyl diphosphate = menaquinol-4 + diphosphate. The catalysed reaction is all-trans-decaprenyl diphosphate + 4-hydroxybenzoate = 4-hydroxy-3-(all-trans-decaprenyl)benzoate + diphosphate. It functions in the pathway quinol/quinone metabolism; menaquinone biosynthesis. Its pathway is cofactor biosynthesis; ubiquinone biosynthesis. Functionally, prenyltransferase that mediates the formation of menaquinone-4 (MK-4) and coenzyme Q10. MK-4 is a vitamin K2 isoform required for endothelial cell development. Mediates the conversion of phylloquinone (PK) into MK-4, probably by cleaving the side chain of phylloquinone (PK) to release 2-methyl-1,4-naphthoquinone (menadione; K3) and then prenylating it with geranylgeranyl pyrophosphate (GGPP) to form MK-4. Also plays a role in cardiovascular development independently of MK-4 biosynthesis, by acting as a coenzyme Q10 biosynthetic enzyme: coenzyme Q10, also named ubiquinone, plays an important antioxidant role in the cardiovascular system. Mediates biosynthesis of coenzyme Q10 in the Golgi membrane, leading to protect cardiovascular tissues from NOS3/eNOS-dependent oxidative stress. In Rattus norvegicus (Rat), this protein is UbiA prenyltransferase domain-containing protein 1 (Ubiad1).